A 275-amino-acid chain; its full sequence is 2,3,4,5-tetrahydropyridine-2,6-dicarboxylate N-succinyltransferase (275 aa).

Residues Arg106 and Asp143 each coordinate substrate.

Belongs to the transferase hexapeptide repeat family. As to quaternary structure, homotrimer.

It is found in the cytoplasm. It catalyses the reaction (S)-2,3,4,5-tetrahydrodipicolinate + succinyl-CoA + H2O = (S)-2-succinylamino-6-oxoheptanedioate + CoA. It functions in the pathway amino-acid biosynthesis; L-lysine biosynthesis via DAP pathway; LL-2,6-diaminopimelate from (S)-tetrahydrodipicolinate (succinylase route): step 1/3. The protein is 2,3,4,5-tetrahydropyridine-2,6-dicarboxylate N-succinyltransferase of Burkholderia pseudomallei (strain 1106a).